Reading from the N-terminus, the 352-residue chain is Uroporphyrinogen decarboxylase (352 aa).

Substrate-binding positions include 26-30 (RQAGR), Phe-45, Asp-76, Tyr-153, Ser-208, and His-323.

The protein belongs to the uroporphyrinogen decarboxylase family. Homodimer.

It is found in the cytoplasm. It catalyses the reaction uroporphyrinogen III + 4 H(+) = coproporphyrinogen III + 4 CO2. It participates in porphyrin-containing compound metabolism; protoporphyrin-IX biosynthesis; coproporphyrinogen-III from 5-aminolevulinate: step 4/4. In terms of biological role, catalyzes the decarboxylation of four acetate groups of uroporphyrinogen-III to yield coproporphyrinogen-III. The protein is Uroporphyrinogen decarboxylase of Parasynechococcus marenigrum (strain WH8102).